The chain runs to 382 residues: D-galactonate dehydratase (382 aa).

Position 183 (D183) interacts with Mg(2+). Catalysis depends on H185, which acts as the Proton donor. Mg(2+)-binding residues include E209 and E235. The active-site Proton acceptor is the H285. Positions 361-382 (NENPPDWRNPVWRHSDGSIAEW) are disordered.

The protein belongs to the mandelate racemase/muconate lactonizing enzyme family. GalD subfamily. Mg(2+) is required as a cofactor.

The enzyme catalyses D-galactonate = 2-dehydro-3-deoxy-D-galactonate + H2O. It participates in carbohydrate acid metabolism; D-galactonate degradation; D-glyceraldehyde 3-phosphate and pyruvate from D-galactonate: step 1/3. Its function is as follows. Catalyzes the dehydration of D-galactonate to 2-keto-3-deoxy-D-galactonate. This chain is D-galactonate dehydratase, found in Xanthomonas euvesicatoria pv. vesicatoria (strain 85-10) (Xanthomonas campestris pv. vesicatoria).